The sequence spans 420 residues: Exodeoxyribonuclease 7 large subunit (420 aa).

This sequence belongs to the XseA family. As to quaternary structure, heterooligomer composed of large and small subunits.

It localises to the cytoplasm. The catalysed reaction is Exonucleolytic cleavage in either 5'- to 3'- or 3'- to 5'-direction to yield nucleoside 5'-phosphates.. Bidirectionally degrades single-stranded DNA into large acid-insoluble oligonucleotides, which are then degraded further into small acid-soluble oligonucleotides. This is Exodeoxyribonuclease 7 large subunit from Helicobacter pylori (strain ATCC 700392 / 26695) (Campylobacter pylori).